The following is a 931-amino-acid chain: Myelin regulatory factor homolog 1 (931 aa).

The Cytoplasmic segment spans residues 1–658; sequence MSSSDLLKGE…SCGSRLSQGT (658 aa). The segment at 29 to 143 is disordered; the sequence is TDEDDGSMVS…QQHQQTRGGN (115 aa). The span at 37–52 shows a compositional bias: polar residues; the sequence is VSPTSSADSMHQNLGV. The span at 53–68 shows a compositional bias: low complexity; that stretch reads QQQQQQMLQAQQRQNQ. Positions 117–126 are enriched in polar residues; the sequence is DNGNQTMNNI. Positions 127-138 are enriched in low complexity; that stretch reads QSQQLSQQQHQQ. The NDT80 DNA-binding region spans 169–436; the sequence is GTAAVNQPTN…TNPGSFEPQD (268 aa). The 100-residue stretch at 483 to 582 folds into the Peptidase S74 domain; it reads SDIRLKEAIT…RMTGDLDSKI (100 aa). Residues 659 to 679 form a helical membrane-spanning segment; that stretch reads VVTLVSIMAACLLAMSALYVL. Over 680-931 the chain is Lumenal; that stretch reads DWHNRNYGYH…FYRMCTLSSS (252 aa). 2 N-linked (GlcNAc...) asparagine glycosylation sites follow: Asn797 and Asn912.

The protein belongs to the MRF family. As to quaternary structure, homotrimer. Interacts with myrf-2. Interacts (via C-terminus) with pan-1 (via LRR regions); the interaction promotes the role of myrf-1 in the synaptic remodeling of DD GABAergic motor neurons at the cell membrane. In terms of processing, myelin regulatory factor: Follows autocatalytic cleavage via the peptidase S74 domain. Autoprocessing is apparently constitutive and is essential for transcriptional activity. As to expression, widely expressed in many tissues, including neuronal, muscle and epidermal stem cells. In neurons, expressed in dorsal D (DD) GABAergic motor neurons.

The protein localises to the endoplasmic reticulum membrane. Its subcellular location is the nucleus. It is found in the apical cell membrane. It localises to the cytoplasm. Functionally, constitutes a precursor of the transcription factor. Mediates the autocatalytic cleavage that releases the Myelin regulatory factor homolog 1, N-terminal component that specifically activates transcription of genes involved in synaptic rewiring during nervous system maturation. Membrane-bound part that has no transcription factor activity and remains attached to the endoplasmic reticulum membrane following cleavage. In terms of biological role, transcription factor that specifically activates expression of genes involved in synaptic rewiring during nervous system maturation. Specifically required for dorsal D (DD) GABAergic motor neurons synaptic rewiring. Acts in complex with myrf-2 paralog. The polypeptide is Myelin regulatory factor homolog 1 (Caenorhabditis elegans).